The chain runs to 498 residues: Pyridine nucleotide-disulfide oxidoreductase domain-containing protein 1 (498 aa).

Methionine 1 bears the N-acetylmethionine mark.

This sequence belongs to the class-I pyridine nucleotide-disulfide oxidoreductase family. PYROXD1 subfamily. FAD is required as a cofactor.

It is found in the nucleus. The protein resides in the cytoplasm. It localises to the myofibril. Its subcellular location is the sarcomere. In terms of biological role, probable FAD-dependent oxidoreductase; involved in the cellular oxidative stress response. Required for normal sarcomere structure and muscle fiber integrity. This chain is Pyridine nucleotide-disulfide oxidoreductase domain-containing protein 1 (Pyroxd1), found in Rattus norvegicus (Rat).